The sequence spans 447 residues: Biotin carboxylase (447 aa).

A Biotin carboxylation domain is found at 1–447; sequence MKFDKILIAN…STSFVQEMNK (447 aa). Residues K117, K159, 165–166, 201–204, and H209 contribute to the ATP site; these read GG and EKFI. Positions 121-318 constitute an ATP-grasp domain; sequence KETMQKAGVP…LLVEQIRIAQ (198 aa). Position 238 (K238) interacts with hydrogencarbonate. ATP-binding residues include E276 and E289. Residues E276, E289, and N291 each coordinate Mg(2+). Positions 276, 289, and 291 each coordinate Mn(2+). The hydrogencarbonate site is built by R293, V296, and R339. The active site involves R293. R339 serves as a coordination point for biotin.

Acetyl-CoA carboxylase is a heterohexamer of biotin carboxyl carrier protein, biotin carboxylase and the two subunits of carboxyl transferase in a 2:2 complex. It depends on Mg(2+) as a cofactor. The cofactor is Mn(2+).

It carries out the reaction N(6)-biotinyl-L-lysyl-[protein] + hydrogencarbonate + ATP = N(6)-carboxybiotinyl-L-lysyl-[protein] + ADP + phosphate + H(+). Its pathway is lipid metabolism; malonyl-CoA biosynthesis; malonyl-CoA from acetyl-CoA: step 1/1. Its function is as follows. This protein is a component of the acetyl coenzyme A carboxylase complex; first, biotin carboxylase catalyzes the carboxylation of the carrier protein and then the transcarboxylase transfers the carboxyl group to form malonyl-CoA. The protein is Biotin carboxylase (accC) of Nostoc sp. (strain PCC 7120 / SAG 25.82 / UTEX 2576).